The primary structure comprises 859 residues: DNA mismatch repair protein MutS (859 aa).

615 to 622 (GPNMGGKS) contacts ATP.

It belongs to the DNA mismatch repair MutS family.

This protein is involved in the repair of mismatches in DNA. It is possible that it carries out the mismatch recognition step. This protein has a weak ATPase activity. The sequence is that of DNA mismatch repair protein MutS from Chromohalobacter salexigens (strain ATCC BAA-138 / DSM 3043 / CIP 106854 / NCIMB 13768 / 1H11).